The primary structure comprises 89 residues: Small ribosomal subunit protein uS15 (89 aa).

Belongs to the universal ribosomal protein uS15 family. As to quaternary structure, part of the 30S ribosomal subunit. Forms a bridge to the 50S subunit in the 70S ribosome, contacting the 23S rRNA.

Its function is as follows. One of the primary rRNA binding proteins, it binds directly to 16S rRNA where it helps nucleate assembly of the platform of the 30S subunit by binding and bridging several RNA helices of the 16S rRNA. Functionally, forms an intersubunit bridge (bridge B4) with the 23S rRNA of the 50S subunit in the ribosome. This is Small ribosomal subunit protein uS15 from Azotobacter vinelandii (strain DJ / ATCC BAA-1303).